The primary structure comprises 423 residues: Imidazolonepropionase (423 aa).

Positions 78 and 80 each coordinate Fe(3+). The Zn(2+) site is built by histidine 78 and histidine 80. 4-imidazolone-5-propanoate contacts are provided by arginine 87, tyrosine 150, and histidine 183. Tyrosine 150 provides a ligand contact to N-formimidoyl-L-glutamate. Histidine 247 provides a ligand contact to Fe(3+). Histidine 247 contacts Zn(2+). Glutamate 250 contributes to the 4-imidazolone-5-propanoate binding site. Residue aspartate 322 coordinates Fe(3+). Aspartate 322 is a binding site for Zn(2+). N-formimidoyl-L-glutamate-binding residues include asparagine 324 and glycine 326. A 4-imidazolone-5-propanoate-binding site is contributed by serine 327.

The protein belongs to the metallo-dependent hydrolases superfamily. HutI family. Requires Zn(2+) as cofactor. The cofactor is Fe(3+).

The protein resides in the cytoplasm. The enzyme catalyses 4-imidazolone-5-propanoate + H2O = N-formimidoyl-L-glutamate. The protein operates within amino-acid degradation; L-histidine degradation into L-glutamate; N-formimidoyl-L-glutamate from L-histidine: step 3/3. Its function is as follows. Catalyzes the hydrolytic cleavage of the carbon-nitrogen bond in imidazolone-5-propanoate to yield N-formimidoyl-L-glutamate. It is the third step in the universal histidine degradation pathway. The polypeptide is Imidazolonepropionase (Bacillus cereus (strain ZK / E33L)).